The primary structure comprises 328 residues: Cytosolic Fe-S cluster assembly factor NBP35 (328 aa).

Cysteine 27, cysteine 41, cysteine 44, and cysteine 50 together coordinate [4Fe-4S] cluster. 80–87 (GKGGVGKS) is a binding site for ATP. The [4Fe-4S] cluster site is built by cysteine 253 and cysteine 256.

The protein belongs to the Mrp/NBP35 ATP-binding proteins family. NUBP1/NBP35 subfamily. Heterotetramer of 2 NBP35 and 2 CFD1 chains. It depends on [4Fe-4S] cluster as a cofactor.

The protein resides in the cytoplasm. It localises to the nucleus. Functionally, component of the cytosolic iron-sulfur (Fe/S) protein assembly (CIA) machinery. Required for maturation of extramitochondrial Fe-S proteins. The NBP35-CFD1 heterotetramer forms a Fe-S scaffold complex, mediating the de novo assembly of an Fe-S cluster and its transfer to target apoproteins. Required for biogenesis and export of both ribosomal subunits, which may reflect a role in assembly of the Fe/S clusters in RLI1, a protein which performs rRNA processing and ribosome export. This is Cytosolic Fe-S cluster assembly factor NBP35 from Saccharomyces cerevisiae (strain ATCC 204508 / S288c) (Baker's yeast).